The chain runs to 330 residues: Aspartate--ammonia ligase (330 aa).

This sequence belongs to the class-II aminoacyl-tRNA synthetase family. AsnA subfamily.

The protein resides in the cytoplasm. It carries out the reaction L-aspartate + NH4(+) + ATP = L-asparagine + AMP + diphosphate + H(+). The protein operates within amino-acid biosynthesis; L-asparagine biosynthesis; L-asparagine from L-aspartate (ammonia route): step 1/1. The chain is Aspartate--ammonia ligase from Haemophilus influenzae (strain ATCC 51907 / DSM 11121 / KW20 / Rd).